The chain runs to 393 residues: tRNA(Met) cytidine acetate ligase (393 aa).

ATP-binding residues include Gly81, Asn142, and Arg167.

This sequence belongs to the TmcAL family.

It is found in the cytoplasm. It catalyses the reaction cytidine(34) in elongator tRNA(Met) + acetate + ATP = N(4)-acetylcytidine(34) in elongator tRNA(Met) + AMP + diphosphate. Catalyzes the formation of N(4)-acetylcytidine (ac(4)C) at the wobble position of elongator tRNA(Met), using acetate and ATP as substrates. First activates an acetate ion to form acetyladenylate (Ac-AMP) and then transfers the acetyl group to tRNA to form ac(4)C34. The polypeptide is tRNA(Met) cytidine acetate ligase (Bacillus cereus (strain ATCC 14579 / DSM 31 / CCUG 7414 / JCM 2152 / NBRC 15305 / NCIMB 9373 / NCTC 2599 / NRRL B-3711)).